The chain runs to 466 residues: Ribulose bisphosphate carboxylase large chain (466 aa).

Lys5 is modified (N6,N6,N6-trimethyllysine). The substrate site is built by Asn114 and Thr164. Lys166 acts as the Proton acceptor in catalysis. Residue Lys168 coordinates substrate. 3 residues coordinate Mg(2+): Lys192, Asp194, and Glu195. An N6-carboxylysine modification is found at Lys192. His285 (proton acceptor) is an active-site residue. Substrate-binding residues include Arg286, His318, and Ser370.

It belongs to the RuBisCO large chain family. Type I subfamily. As to quaternary structure, heterohexadecamer of 8 large chains and 8 small chains; disulfide-linked. The disulfide link is formed within the large subunit homodimers. The cofactor is Mg(2+). In terms of processing, the disulfide bond which can form in the large chain dimeric partners within the hexadecamer appears to be associated with oxidative stress and protein turnover.

It is found in the plastid. Its subcellular location is the chloroplast. It carries out the reaction 2 (2R)-3-phosphoglycerate + 2 H(+) = D-ribulose 1,5-bisphosphate + CO2 + H2O. It catalyses the reaction D-ribulose 1,5-bisphosphate + O2 = 2-phosphoglycolate + (2R)-3-phosphoglycerate + 2 H(+). Its function is as follows. RuBisCO catalyzes two reactions: the carboxylation of D-ribulose 1,5-bisphosphate, the primary event in carbon dioxide fixation, as well as the oxidative fragmentation of the pentose substrate in the photorespiration process. Both reactions occur simultaneously and in competition at the same active site. In Silene gallica (Common catchfly), this protein is Ribulose bisphosphate carboxylase large chain.